Reading from the N-terminus, the 141-residue chain is UPF0102 protein BRADO0179 (141 aa).

Residues methionine 1–glutamate 24 are disordered. Over residues lysine 10–lysine 19 the composition is skewed to low complexity.

This sequence belongs to the UPF0102 family.

This Bradyrhizobium sp. (strain ORS 278) protein is UPF0102 protein BRADO0179.